Here is a 491-residue protein sequence, read N- to C-terminus: NADH-quinone oxidoreductase subunit N (491 aa).

The next 14 helical transmembrane spans lie at 11–31, 38–58, 74–94, 106–126, 128–148, 163–183, 206–226, 243–263, 272–292, 301–321, 336–356, 379–399, 410–430, and 465–485; these read ATAE…TTFA, LAYG…YNTA, LLGD…LLYG, PEYY…VTSN, LLSM…LVAF, FVLG…LYGA, LLFG…VVPF, LIIA…LLVW, WQTM…LAAI, LAYS…SGVV, MFYA…IILL, FAAM…FIGF, VAAG…IGAF, and LAIA…TFVL.

Belongs to the complex I subunit 2 family. In terms of assembly, NDH-1 is composed of 14 different subunits. Subunits NuoA, H, J, K, L, M, N constitute the membrane sector of the complex.

Its subcellular location is the cell inner membrane. It carries out the reaction a quinone + NADH + 5 H(+)(in) = a quinol + NAD(+) + 4 H(+)(out). In terms of biological role, NDH-1 shuttles electrons from NADH, via FMN and iron-sulfur (Fe-S) centers, to quinones in the respiratory chain. The immediate electron acceptor for the enzyme in this species is believed to be ubiquinone. Couples the redox reaction to proton translocation (for every two electrons transferred, four hydrogen ions are translocated across the cytoplasmic membrane), and thus conserves the redox energy in a proton gradient. This is NADH-quinone oxidoreductase subunit N from Azoarcus sp. (strain BH72).